Here is a 323-residue protein sequence, read N- to C-terminus: Pseudouridine-5'-phosphate glycosidase (323 aa).

The Proton donor role is filled by glutamate 43. Substrate is bound by residues lysine 104 and valine 124. Residue aspartate 156 coordinates Mn(2+). 158 to 160 lines the substrate pocket; that stretch reads SAD. Lysine 177 serves as the catalytic Nucleophile.

It belongs to the pseudouridine-5'-phosphate glycosidase family. As to quaternary structure, homotrimer. Mn(2+) serves as cofactor.

The enzyme catalyses D-ribose 5-phosphate + uracil = psi-UMP + H2O. Its function is as follows. Catalyzes the reversible cleavage of pseudouridine 5'-phosphate (PsiMP) to ribose 5-phosphate and uracil. Functions biologically in the cleavage direction, as part of a pseudouridine degradation pathway. The chain is Pseudouridine-5'-phosphate glycosidase from Streptomyces griseus subsp. griseus (strain JCM 4626 / CBS 651.72 / NBRC 13350 / KCC S-0626 / ISP 5235).